Consider the following 130-residue polypeptide: Large ribosomal subunit protein bL20 (130 aa).

Belongs to the bacterial ribosomal protein bL20 family.

Its function is as follows. Binds directly to 23S ribosomal RNA and is necessary for the in vitro assembly process of the 50S ribosomal subunit. It is not involved in the protein synthesizing functions of that subunit. The chain is Large ribosomal subunit protein bL20 from Salinispora arenicola (strain CNS-205).